Consider the following 88-residue polypeptide: Small ribosomal subunit protein bS20 (88 aa).

It belongs to the bacterial ribosomal protein bS20 family.

Its function is as follows. Binds directly to 16S ribosomal RNA. This chain is Small ribosomal subunit protein bS20, found in Methylorubrum extorquens (strain CM4 / NCIMB 13688) (Methylobacterium extorquens).